Reading from the N-terminus, the 359-residue chain is WAT1-related protein At5g64700 (359 aa).

10 helical membrane passes run 10 to 30 (LMVTIIQVIYTIMFLISKAVF), 37 to 57 (FVFVFYRQAFATIFLAPLAFF), 66 to 86 (LSFVTFIKIFMLSLFGVTLSL), 100 to 120 (LAAATTASLPAITFFLALLFG), 135 to 155 (LVGITVCMGGVIILAIYKGPL), 186 to 206 (WLKGCVLMITSNILWGLWLVL), 218 to 238 (LYFTTLHCLLSSIQSFVIAIA), 256 to 276 (AVIYCGFIVTGVAYYLQSWVI), 282 to 302 (VFLSMFTPLSLLFTLLSSAIL), and 306 to 326 (IISLGSIVGGLLLIIGLYCVL). 2 EamA domains span residues 18–136 (IYTI…AKLV) and 198–326 (ILWG…YCVL).

This sequence belongs to the drug/metabolite transporter (DMT) superfamily. Plant drug/metabolite exporter (P-DME) (TC 2.A.7.4) family.

It localises to the membrane. The polypeptide is WAT1-related protein At5g64700 (Arabidopsis thaliana (Mouse-ear cress)).